Here is a 457-residue protein sequence, read N- to C-terminus: Argininosuccinate lyase (457 aa).

It belongs to the lyase 1 family. Argininosuccinate lyase subfamily.

It is found in the cytoplasm. The catalysed reaction is 2-(N(omega)-L-arginino)succinate = fumarate + L-arginine. It functions in the pathway amino-acid biosynthesis; L-arginine biosynthesis; L-arginine from L-ornithine and carbamoyl phosphate: step 3/3. This is Argininosuccinate lyase from Serratia proteamaculans (strain 568).